We begin with the raw amino-acid sequence, 466 residues long: Glutamate decarboxylase beta (466 aa).

Substrate-binding residues include Thr62 and Asn83. Pyridoxal 5'-phosphate-binding positions include Ser126–Ser127, Thr212, and His275. Lys276 is subject to N6-(pyridoxal phosphate)lysine. An N6-acetyllysine mark is found at Lys446, Lys453, and Lys464.

Belongs to the group II decarboxylase family. In terms of assembly, homohexamer composed of three dimers. Pyridoxal 5'-phosphate is required as a cofactor.

The enzyme catalyses L-glutamate + H(+) = 4-aminobutanoate + CO2. Its function is as follows. Converts glutamate to gamma-aminobutyrate (GABA), consuming one intracellular proton in the reaction. The gad system helps to maintain a near-neutral intracellular pH when cells are exposed to extremely acidic conditions. The ability to survive transit through the acidic conditions of the stomach is essential for successful colonization of the mammalian host by commensal and pathogenic bacteria. The protein is Glutamate decarboxylase beta (gadB) of Escherichia coli O6:H1 (strain CFT073 / ATCC 700928 / UPEC).